We begin with the raw amino-acid sequence, 391 residues long: Phosphoglycerate kinase (391 aa).

Residues 21-23 (DLN), arginine 36, 59-62 (HLGR), arginine 113, and arginine 146 each bind substrate. ATP is bound by residues lysine 197, glutamate 319, and 345–348 (GGDT).

Belongs to the phosphoglycerate kinase family. In terms of assembly, monomer.

Its subcellular location is the cytoplasm. The enzyme catalyses (2R)-3-phosphoglycerate + ATP = (2R)-3-phospho-glyceroyl phosphate + ADP. It functions in the pathway carbohydrate degradation; glycolysis; pyruvate from D-glyceraldehyde 3-phosphate: step 2/5. This Xylella fastidiosa (strain Temecula1 / ATCC 700964) protein is Phosphoglycerate kinase.